We begin with the raw amino-acid sequence, 2962 residues long: Sex determination and dosage compensation protein sdc-2 (2962 aa).

Disordered stretches follow at residues 1–28 (MSDE…ADPD) and 1061–1110 (DKRS…QVDP). Residues 15-27 (SFNESDSPDEADP) are compositionally biased toward acidic residues. 2 coiled-coil regions span residues 995–1085 (LESA…LADK) and 1140–1268 (REER…KRVS). Disordered regions lie at residues 1535 to 1554 (PASL…GSPV) and 2198 to 2227 (LDSS…NQLD). Over residues 2212–2225 (FEDSPSEDENDENQ) the composition is skewed to acidic residues.

Component of the SDC complex, which consists of sdc-1, sdc-2 and sdc-3. Within the complex, interacts with sdc-1 and sdc-3. In terms of tissue distribution, expressed in hermaphrodites (XX), but absent in males (XO) (at protein level).

Its subcellular location is the chromosome. Functionally, component of the SDC complex that functions in sex determination and in X chromosome dosage compensation specifically in hermaphrodite (XX) animals. Required for the recruitment of the condensin I-like dosage compensation complex to the male sex-determining autosomal gene her-1, thereby contributing to its repression and initiating hermaphrodite sexual development. Plays a central role in X-chromosome recognition and in the recruitment and assembly of the dosage compensation complex and the dosage compensation protein dpy-21 onto the X chromosomes in hermaphrodites, which leads to a reduction of X-linked gene transcription and an equalization of X-linked gene expression between the sexes. May confer protection against toxicity induced by heavy metals such as arsenite. This is Sex determination and dosage compensation protein sdc-2 from Caenorhabditis elegans.